The primary structure comprises 396 residues: D-alanine--D-alanine ligase (396 aa).

Positions 141 to 347 (KMLWQAAGLP…PQDLMAQLLS (207 aa)) constitute an ATP-grasp domain. 174-229 (ETRLGYPLFVKPAQAGSSVGASAVQTRAPLIPAIEAAFQWDEVVLVERYVRAREIE) provides a ligand contact to ATP. 3 residues coordinate Mg(2+): D301, E314, and N316. The interval 374 to 396 (AAHDPDAQGDDWDQRDSNPLPTA) is disordered.

Belongs to the D-alanine--D-alanine ligase family. It depends on Mg(2+) as a cofactor. Mn(2+) serves as cofactor.

The protein resides in the cytoplasm. The catalysed reaction is 2 D-alanine + ATP = D-alanyl-D-alanine + ADP + phosphate + H(+). The protein operates within cell wall biogenesis; peptidoglycan biosynthesis. Its function is as follows. Cell wall formation. In Treponema pallidum (strain Nichols), this protein is D-alanine--D-alanine ligase.